Reading from the N-terminus, the 947-residue chain is Serine-aspartate repeat-containing protein C (947 aa).

A signal peptide spans 1–50 (MNNKKTATNRKGMIPNRLNKFSIRKYSVGTASILVGTTLIFGLSGHEAKA). A disordered region spans residues 51-164 (AEHTNGELNQ…STTPKTTTIK (114 aa)). The interval 51–495 (AEHTNGELNQ…GSSTANGDQK (445 aa)) is ligand binding A region. A compositionally biased stretch (polar residues) spans 56-71 (GELNQSKNETTAPSEN). A compositionally biased stretch (basic and acidic residues) spans 72–83 (KTTKKVDSRQLK). Residues 84-155 (DNTQTATADQ…SNLTQAKDVS (72 aa)) are compositionally biased toward polar residues. 2 CNA-B domains span residues 496-606 (KYNL…YKTP) and 607-717 (KYSL…EEET). The disordered stretch occupies residues 678–927 (TQTGTNTTED…NNSNNGTLFG (250 aa)). 2 stretches are compositionally biased toward acidic residues: residues 685–695 (TEDDKDADGGE) and 712–886 (YYEE…DSDS). An LPXTG sorting signal motif is present at residues 910–914 (LPETG). A compositionally biased stretch (low complexity) spans 912–927 (ETGSENNNSNNGTLFG). Threonine 913 carries the post-translational modification Pentaglycyl murein peptidoglycan amidated threonine. Residues 914–947 (GSENNNSNNGTLFGGLFAALGSLLLFGRRKKQNK) constitute a propeptide, removed by sortase.

Belongs to the serine-aspartate repeat-containing protein (SDr) family. In terms of assembly, homodimerizes; via N2-Domain. Interacts with host NRXN1; this interaction mediates bacterial attachment to host cells.

It localises to the secreted. Its subcellular location is the cell wall. Its function is as follows. Cell surface-associated calcium-binding protein which plays an important role in adhesion and pathogenesis. Mediates interactions with components of the extracellular matrix such as host NRXN1 to promote bacterial adhesion. The chain is Serine-aspartate repeat-containing protein C (sdrC) from Staphylococcus aureus (strain USA300).